The primary structure comprises 128 residues: Large ribosomal subunit protein bL12 (128 aa).

It belongs to the bacterial ribosomal protein bL12 family. Homodimer. Part of the ribosomal stalk of the 50S ribosomal subunit. Forms a multimeric L10(L12)X complex, where L10 forms an elongated spine to which 2 to 4 L12 dimers bind in a sequential fashion. Binds GTP-bound translation factors.

Forms part of the ribosomal stalk which helps the ribosome interact with GTP-bound translation factors. Is thus essential for accurate translation. The chain is Large ribosomal subunit protein bL12 from Sulfurihydrogenibium sp. (strain YO3AOP1).